A 299-amino-acid chain; its full sequence is Homeobox protein Nkx-2.5 (299 aa).

Over residues 90-119 the composition is skewed to basic and acidic residues; sequence KDPKDHKKDICPLQKTLEHDKREAEDPERP. The interval 90–128 is disordered; sequence KDPKDHKKDICPLQKTLEHDKREAEDPERPRQRKRRKPR. A DNA-binding region (homeobox) is located at residues 124 to 183; sequence RRKPRVLFSQAQVYELERRFKQQKYLSAPERDHLANVLKLTSTQVKIWFQNRRYKCKRQR.

Belongs to the NK-2 homeobox family. As to quaternary structure, homodimer (via the homeobox); binds DNA as homodimer. In terms of tissue distribution, heart and gut tissue.

It is found in the nucleus. Transcription factor required for the development of the heart and the spleen. Implicated in commitment to and/or differentiation of the myocardial lineage. May regulate the expression of genes involved in cardiogenesis and play a role in the formation of gut and the pharyngeal region. Binds to the core DNA motif of promoter. This chain is Homeobox protein Nkx-2.5 (nkx-2.5), found in Xenopus laevis (African clawed frog).